Consider the following 86-residue polypeptide: Omega-theraphotoxin-Hhn1f 4 (86 aa).

The first 21 residues, 1–21 (MKSIVFVALFGLALLAVVCSA), serve as a signal peptide directing secretion. The propeptide occupies 22-50 (SEDAHKELLKEVVRAMVVDKTDAVQAGER). 3 disulfides stabilise this stretch: C52–C66, C59–C71, and C65–C78.

It belongs to the neurotoxin 10 (Hwtx-1) family. 17 (Hntx-9) subfamily. As to expression, expressed by the venom gland.

It is found in the secreted. Ion channel inhibitor. The chain is Omega-theraphotoxin-Hhn1f 4 from Cyriopagopus hainanus (Chinese bird spider).